The sequence spans 481 residues: MAELQMLLEEEIPSGKRALIESYQNLTRVADYCENNYIQATDKRKALEETKAYTTQSLASVAYQINALANNVLQLLDIQASQLRRMESSINHISQTVDIHKEKVARREIGILTTNKNTSRTHKIIAPANMERPVRYIRKPIDYTVLDDVGHGVKWLKAKHGNNQPARTGTLSRTNPPTQKPPSPPVSGRGTLGRNTPYKTLEPVKPPTVPNDYMTSPARLGSQHSPGRTASLNQRPRTHSGSSGGSGSRENSGSSSIGIPIAVPTPSPPTAGPAAPGAAPGSQYGTMTRQISRHNSTTSSTSSGGYRRTPSVAAQFSAQPHVNGGPLYSQNSISVAPPPPPMPQLTPQIPLTGFVARVQENIADSPTPPPPPPPDDIPMFDDSPPPPPPPPVDYEDEEAAVVQYSDPYADGDPAWAPKNYIEKVVAIYDYTKDKDDELSFKEGAIIYVIKKNDDGWFEGVCNRVTGLFPGNYVESIMHYTD.

Alanine 2 bears the N-acetylalanine mark. The segment at 18–79 (ALIESYQNLT…NNVLQLLDIQ (62 aa)) is required for binding to WASF1. Residues 45–107 (KALEETKAYT…DIHKEKVARR (63 aa)) form the t-SNARE coiled-coil homology domain. The residue at position 53 (tyrosine 53) is a Phosphotyrosine. A disordered region spans residues 158–285 (AKHGNNQPAR…PGAAPGSQYG (128 aa)). A compositionally biased stretch (polar residues) spans 161–175 (GNNQPARTGTLSRTN). Residues threonine 174 and threonine 178 each carry the phosphothreonine modification. Phosphoserine occurs at positions 183 and 187. Phosphotyrosine is present on tyrosine 213. A Phosphothreonine modification is found at threonine 215. Residues serine 216, serine 222, and serine 225 each carry the phosphoserine modification. Positions 222–235 (SQHSPGRTASLNQR) are enriched in polar residues. Low complexity-rich tracts occupy residues 248–258 (SRENSGSSSIG) and 272–282 (GPAAPGAAPGS). A phosphoserine mark is found at serine 292 and serine 296. Disordered stretches follow at residues 318–348 (AQPH…LTPQ) and 361–392 (NIAD…PPPV). Pro residues-rich tracts occupy residues 366-376 (PTPPPPPPPDD) and 383-392 (SPPPPPPPPV). One can recognise an SH3 domain in the interval 419–478 (NYIEKVVAIYDYTKDKDDELSFKEGAIIYVIKKNDDGWFEGVCNRVTGLFPGNYVESIMH). Phosphotyrosine is present on tyrosine 428. Residue serine 439 is modified to Phosphoserine. A Phosphothreonine modification is found at threonine 480.

Belongs to the ABI family. Interacts with ENAH, Abelson murine leukemia virus V-ABL, ABL1, STX1A, SNAP25, VAMP2, and through its N-terminus with WASF1. Part of a complex consisting of ABI1, STX1A and SNAP25. Part of a complex consisting of ABI1, EPS8 and SOS1. Interacts with EPS8, SOS1, SOS2, GRB2, SPTA1, and the first SH3 domain of NCK1. Component of the WAVE2 complex composed of ABI1, CYFIP1/SRA1, NCKAP1/NAP1 (NCKAP1l/HEM1 in hematopoietic cells) and WASF2/WAVE2. Interacts (via SH3 domain) with SHANK2 and SHANK3, but not SHANK1; the interaction is direct. Interacts with the heterodimer MYC:MAX; the interaction may enhance MYC:MAX transcriptional activity. Interacts with FNBP1L (via the SH3 domain), WASF2, and CDC42, but only in the presence of FNBP1L. In terms of processing, phosphorylated on tyrosine residues after serum stimulation or induction by v-Abl. Seems to be phosphorylated at Tyr-53 by ABL1, required for nuclear but not for synaptic localization. As to expression, widely expressed with highest levels in bone marrow, spleen, brain, testes, and embryonic brain. In adult brain prominently expressed in the neocortex, hippocampus and dentate gyrus.

It localises to the cytoplasm. Its subcellular location is the nucleus. It is found in the cell projection. The protein localises to the lamellipodium. The protein resides in the filopodium. It localises to the growth cone. Its subcellular location is the postsynaptic density. It is found in the cytoskeleton. May act in negative regulation of cell growth and transformation by interacting with nonreceptor tyrosine kinases ABL1 and/or ABL2. In vitro, at least isoform 2 and isoform 4 suppress the transforming activity of Abelson murine leukemia virus (v-Abl) after overexpression in fibroblasts. May play a role in regulation EGF-induced Erk pathway activation. Involved in cytoskeletal reorganization and EGFR signaling. Together with EPS8 participates in transduction of signals from Ras to Rac. In vitro, a trimeric complex of ABI1, EPS8 and SOS1 exhibits Rac specific guanine nucleotide exchange factor (GEF) activity and ABI1 seems to act as an adapter in the complex. Regulates ABL1/c-Abl-mediated phosphorylation of ENAH. Recruits WASF1 to lamellipodia and there seems to regulate WASF1 protein level. In brain, seems to regulate the dendritic outgrowth and branching as well as to determine the shape and number of synaptic contacts of developing neurons. This Mus musculus (Mouse) protein is Abl interactor 1.